The following is a 345-amino-acid chain: S-adenosylmethionine:tRNA ribosyltransferase-isomerase (345 aa).

Belongs to the QueA family. Monomer.

The protein resides in the cytoplasm. The enzyme catalyses 7-aminomethyl-7-carbaguanosine(34) in tRNA + S-adenosyl-L-methionine = epoxyqueuosine(34) in tRNA + adenine + L-methionine + 2 H(+). The protein operates within tRNA modification; tRNA-queuosine biosynthesis. In terms of biological role, transfers and isomerizes the ribose moiety from AdoMet to the 7-aminomethyl group of 7-deazaguanine (preQ1-tRNA) to give epoxyqueuosine (oQ-tRNA). This chain is S-adenosylmethionine:tRNA ribosyltransferase-isomerase, found in Shewanella woodyi (strain ATCC 51908 / MS32).